We begin with the raw amino-acid sequence, 805 residues long: Zinc finger X-chromosomal protein (805 aa).

Serine 274 carries the post-translational modification Phosphoserine. 13 consecutive C2H2-type zinc fingers follow at residues 425 to 447 (YPCMICGKKFKSRGFLKRHMKNH), 456 to 478 (YRCTDCDYTTNKKISLHNHLESH), 488 to 510 (IECDECGKHFSHAGALFTHKMVH), 519 to 542 (HKCKFCEYETAEQGLLNRHLLAVH), 548 to 570 (HICVECGKGFRHPSELKKHMRIH), 576 to 599 (YQCQYCEYRSADSSNLKTHVKTKH), 605 to 627 (FKCDICLLTFSDTKEVQQHALIH), 633 to 656 (HQCLHCDHKSSNSSDLKRHIISVH), 662 to 684 (HKCDMCDKGFHRPSELKKHVAAH), 690 to 713 (HQCRHCDFKIADPFVLSRHILSVH), 719 to 741 (FRCKRCRKGFRQQSELKKHMKTH), 747 to 770 (YQCEYCEYSTTDASGFKRHVISIH), and 776 to 798 (HRCEYCKKGFRRPSEKNQHIMRH).

This sequence belongs to the krueppel C2H2-type zinc-finger protein family. ZFX/ZFY subfamily.

It is found in the nucleus. In terms of biological role, probable transcriptional activator. In Homo sapiens (Human), this protein is Zinc finger X-chromosomal protein (ZFX).